A 321-amino-acid chain; its full sequence is Phosphoenolpyruvate transferase (321 aa).

A 7,8-didemethyl-8-hydroxy-5-deazariboflavin-binding site is contributed by Asp51.

Belongs to the CofD family. In terms of assembly, homodimer. The cofactor is Mg(2+).

It catalyses the reaction enolpyruvoyl-2-diphospho-5'-guanosine + 7,8-didemethyl-8-hydroxy-5-deazariboflavin = dehydro coenzyme F420-0 + GMP + H(+). The protein operates within cofactor biosynthesis; coenzyme F420 biosynthesis. In terms of biological role, catalyzes the transfer of the phosphoenolpyruvate moiety from enoylpyruvoyl-2-diphospho-5'-guanosine (EPPG) to 7,8-didemethyl-8-hydroxy-5-deazariboflavin (FO) with the formation of dehydro coenzyme F420-0 and GMP. The protein is Phosphoenolpyruvate transferase of Kitasatospora aureofaciens (Streptomyces aureofaciens).